A 351-amino-acid polypeptide reads, in one-letter code: Pinopsin (351 aa).

The Extracellular portion of the chain corresponds to 1-30 (MSSNSSQAPPNGTPGPFDGPQWPYQAPQST). An N-linked (GlcNAc...) asparagine glycan is attached at asparagine 4. Residues 31–55 (YVGVAVLMGTVVACASVVNGLVIVV) form a helical membrane-spanning segment. The Cytoplasmic segment spans residues 56 to 67 (SICYKKLRSPLN). Residues 68-92 (YILVNLAVADLLVTLCGSSVSLSNN) form a helical membrane-spanning segment. The Extracellular portion of the chain corresponds to 93–107 (INGFFVFGRRMCELE). Residues cysteine 104 and cysteine 181 are joined by a disulfide bond. The chain crosses the membrane as a helical span at residues 108–127 (GFMVSLTGIVGLWSLAILAL). At 128–146 (ERYVVVCKPLGDFQFQRRH) the chain is on the cytoplasmic side. A helical transmembrane segment spans residues 147 to 170 (AVSGCAFTWGWALLWSAPPLLGWS). Residues 171–194 (SYVPEGLRTSCGPNWYTGGSNNNS) lie on the Extracellular side of the membrane. Asparagine 192 carries an N-linked (GlcNAc...) asparagine glycan. The helical transmembrane segment at 195 to 222 (YILSLFVTCFVLPLSLILFSYTNLLLTL) threads the bilayer. The Cytoplasmic segment spans residues 223 to 244 (RAAAAQQKEADTTQRAEREVTR). A helical membrane pass occupies residues 245-268 (MVIVMVMAFLLCWLPYSTFALVVA). The Extracellular segment spans residues 269–276 (THKGIIIQ). The chain crosses the membrane as a helical span at residues 277–301 (PVLASLPSYFSKTATVYNPIIYVFM). Lysine 288 is modified (N6-(retinylidene)lysine). Residues 302 to 351 (NKQFQSCLLEMLCCGYQPQRTGKASPGTPGPHADVTAAGLRNKVMPAHPV) lie on the Cytoplasmic side of the membrane. 2 S-palmitoyl cysteine lipidation sites follow: cysteine 314 and cysteine 315.

It belongs to the G-protein coupled receptor 1 family. Opsin subfamily. Post-translationally, phosphorylated on some or all of the serine and threonine residues present in the C-terminal region. As to expression, pineal gland.

Its subcellular location is the membrane. In terms of biological role, produces a slow and prolonged phototransduction response consistent with the non-visual function of pineal photoreception. The protein is Pinopsin of Gallus gallus (Chicken).